We begin with the raw amino-acid sequence, 102 residues long: Small ribosomal subunit protein uS10 (102 aa).

It belongs to the universal ribosomal protein uS10 family. Part of the 30S ribosomal subunit.

In terms of biological role, involved in the binding of tRNA to the ribosomes. In Staphylococcus aureus (strain Mu3 / ATCC 700698), this protein is Small ribosomal subunit protein uS10.